The following is a 227-amino-acid chain: ATP-dependent dethiobiotin synthetase BioD (227 aa).

13–18 is an ATP binding site; it reads DIGKTY. Residue Thr-17 participates in Mg(2+) binding. Lys-38 is a catalytic residue. Ser-42 provides a ligand contact to substrate. Residues Asp-55, 116–119, and 179–180 contribute to the ATP site; these read EGSG and NN. Positions 55 and 116 each coordinate Mg(2+).

The protein belongs to the dethiobiotin synthetase family. In terms of assembly, homodimer. Mg(2+) is required as a cofactor.

The protein localises to the cytoplasm. The enzyme catalyses (7R,8S)-7,8-diammoniononanoate + CO2 + ATP = (4R,5S)-dethiobiotin + ADP + phosphate + 3 H(+). The protein operates within cofactor biosynthesis; biotin biosynthesis; biotin from 7,8-diaminononanoate: step 1/2. Catalyzes a mechanistically unusual reaction, the ATP-dependent insertion of CO2 between the N7 and N8 nitrogen atoms of 7,8-diaminopelargonic acid (DAPA, also called 7,8-diammoniononanoate) to form a ureido ring. The sequence is that of ATP-dependent dethiobiotin synthetase BioD from Clostridium botulinum (strain Alaska E43 / Type E3).